Here is a 339-residue protein sequence, read N- to C-terminus: Spore coat polysaccharide biosynthesis protein SpsG (339 aa).

Residues 241-261 traverse the membrane as a helical segment; sequence IVAGGISLYEAICIGVPCLVL.

This sequence to M.jannaschii MJ1062.

It localises to the cell membrane. Its pathway is spore coat biogenesis; spore coat polysaccharide biosynthesis. In Bacillus subtilis (strain 168), this protein is Spore coat polysaccharide biosynthesis protein SpsG (spsG).